Consider the following 699-residue polypeptide: Receptor-type tyrosine-protein phosphatase epsilon (699 aa).

Positions 1–19 (MEPFCPLLLASFSLSLARA) are cleaved as a signal peptide. Positions 20-36 (GQGNDTTPTESNWTSTT) are enriched in low complexity. Positions 20–40 (GQGNDTTPTESNWTSTTAGPP) are disordered. Residues 20 to 45 (GQGNDTTPTESNWTSTTAGPPDPGAS) are Extracellular-facing. N-linked (GlcNAc...) asparagine glycans are attached at residues asparagine 23 and asparagine 31. Residues 46 to 68 (QPLLTWLLLPLLLLLFLLAAYFF) traverse the membrane as a helical segment. Residues 69–699 (RFRKQRKAVV…DIFSDYANFK (631 aa)) lie on the Cytoplasmic side of the membrane. Tyrosine-protein phosphatase domains follow at residues 134–393 (FREE…LLEY) and 425–688 (LEEE…VQDF). Substrate contacts are provided by residues aspartate 302, 334–340 (CSAGVGR), and glutamine 378. The active-site Phosphocysteine intermediate is cysteine 334. Catalysis depends on cysteine 629, which acts as the Phosphocysteine intermediate. Position 695 is a phosphotyrosine (tyrosine 695).

Belongs to the protein-tyrosine phosphatase family. Receptor class 4 subfamily. Monomer. Isoform 2: Homodimer. Can form oligomers. Dimerization is increased by oxidative stress and decreased by EGFR. Isoform 2 interacts with GRB2. In terms of processing, a catalytically active cytoplasmic form (p65) is produced by proteolytic cleavage of either isoform 1, isoform 2 or isoform 3. Post-translationally, phosphorylated on tyrosine residues by tyrosine kinase Neu. Glycosylated. As to expression, isoform 2 is expressed in the spleen and thymus (at protein level). Detected in fibroblasts, myeloid cells, macrophages, and T-cells but not in B-cell lines. Isoform 1 and isoform 2 are expressed predominantly in the brain, testes, and lungs, with lower levels present in lymph nodes, thymus, spleen, heart and mammary glands. Isoform 1 is expressed in osteoclasts and not in osteoblasts and its expression is related to osteoclast differentiation. It is also expressed in the erythrocytes. Isoform 2 is strongly expressed in skeletal muscle and L6 skeletal muscle cell line.

Its subcellular location is the cell membrane. It localises to the cytoplasm. It carries out the reaction O-phospho-L-tyrosyl-[protein] + H2O = L-tyrosyl-[protein] + phosphate. Its activity is regulated as follows. Inhibited by alendronate (ALN), orthovanadate, and phenylarsine oxide (PAO). Functionally, acts as a negative regulator of insulin receptor (IR) signaling and is involved in insulin-induced glucose metabolism mainly through direct dephosphorylation and inactivation of IR in hepatocytes and liver. Plays a critical role in signaling transduction pathways and phosphoprotein network topology in red blood cells. May play a role in osteoclast formation and function. Its function is as follows. Acts as a negative regulator of insulin receptor (IR) signaling in skeletal muscle. Regulates insulin-induced tyrosine phosphorylation of insulin receptor (IR) and insulin receptor substrate 1 (IRS-1), phosphorylation of protein kinase B and glycogen synthase kinase-3 and insulin induced stimulation of glucose uptake. In terms of biological role, isoform 1 and isoform 2 act as a negative regulator of FceRI-mediated signal transduction leading to cytokine production and degranulation, most likely by acting at the level of SYK to affect downstream events such as phosphorylation of SLP76 and LAT and mobilization of Ca(2+). This chain is Receptor-type tyrosine-protein phosphatase epsilon (Ptpre), found in Mus musculus (Mouse).